We begin with the raw amino-acid sequence, 154 residues long: Putative nuclear shuttle protein (154 aa).

Belongs to the nanoviridae nuclear shuttle protein family.

The protein resides in the host nucleus. Its subcellular location is the host cytoplasm. Its function is as follows. Putative nuclear shuttle protein. The sequence is that of Putative nuclear shuttle protein (DNA-N) from Musa (BBTV).